A 705-amino-acid polypeptide reads, in one-letter code: Probable E3 ubiquitin-protein ligase MID2 (705 aa).

The RING-type zinc finger occupies 30 to 80; it reads CPICLELFEDPLLLPCAHSLCFSCAHRILVSSCSSGESIEPITAFQCPTCR. Residues 137 to 184 form a B box-type 1; degenerate zinc finger; it reads IACQFCEQDPPRDAVKTCITCEVSYCDRCLRATHPNKKPFTSHRLVEP. The B box-type 2 zinc finger occupies 190-232; that stretch reads LRGITCLDHENEKVNMYCVSDDQLICALCKLVGRHRDHQVASL. Zn(2+) contacts are provided by Cys-195, His-198, Cys-218, and His-224. A coiled-coil region spans residues 233 to 301; the sequence is NDRFEKLKQT…IIQQRKQMIA (69 aa). The 60-residue stretch at 340 to 399 folds into the COS domain; it reads LKENDQARFLQSAKNIAERVAMATASSQVLIPDINFNDAFENFALDFSREKKLLEGLDYL. The 101-residue stretch at 404–504 folds into the Fibronectin type-III domain; it reads PPSIREELCT…EPTRLKTNSQ (101 aa). Residues 486 to 679 enclose the B30.2/SPRY domain; it reads INQAGSRNSE…ILSGLPAPDF (194 aa).

It belongs to the TRIM/RBCC family. In terms of assembly, homodimer or heterodimer with MID1. Interacts with IGBP1. Phosphorylated on serine and threonine residues. In terms of tissue distribution, low abundance in brain and lung, with even lower levels in heart, liver, and kidney.

The protein localises to the cytoplasm. It is found in the cytoskeleton. It carries out the reaction S-ubiquitinyl-[E2 ubiquitin-conjugating enzyme]-L-cysteine + [acceptor protein]-L-lysine = [E2 ubiquitin-conjugating enzyme]-L-cysteine + N(6)-ubiquitinyl-[acceptor protein]-L-lysine.. The protein operates within protein modification; protein ubiquitination. Its function is as follows. E3 ubiquitin ligase that plays a role in microtubule stabilization. Mediates the 'Lys-48'-linked polyubiquitination of LRRK2 to drive its localization to microtubules and its proteasomal degradation in neurons. This ubiquitination inhibits LRRK2 kinase activation by RAB29. This Mus musculus (Mouse) protein is Probable E3 ubiquitin-protein ligase MID2 (Mid2).